A 424-amino-acid chain; its full sequence is Anaerobic glycerol-3-phosphate dehydrogenase subunit B (424 aa).

It belongs to the anaerobic G-3-P dehydrogenase subunit B family. Composed of a catalytic GlpA/B dimer and of membrane bound GlpC. The cofactor is FMN.

The catalysed reaction is a quinone + sn-glycerol 3-phosphate = dihydroxyacetone phosphate + a quinol. It functions in the pathway polyol metabolism; glycerol degradation via glycerol kinase pathway; glycerone phosphate from sn-glycerol 3-phosphate (anaerobic route): step 1/1. In terms of biological role, conversion of glycerol 3-phosphate to dihydroxyacetone. Uses fumarate or nitrate as electron acceptor. The protein is Anaerobic glycerol-3-phosphate dehydrogenase subunit B of Yersinia pseudotuberculosis serotype I (strain IP32953).